A 156-amino-acid polypeptide reads, in one-letter code: Small ribosomal subunit protein uS7 (156 aa).

This sequence belongs to the universal ribosomal protein uS7 family. Part of the 30S ribosomal subunit. Contacts proteins S9 and S11.

One of the primary rRNA binding proteins, it binds directly to 16S rRNA where it nucleates assembly of the head domain of the 30S subunit. Is located at the subunit interface close to the decoding center, probably blocks exit of the E-site tRNA. The protein is Small ribosomal subunit protein uS7 of Micrococcus luteus (strain ATCC 4698 / DSM 20030 / JCM 1464 / CCM 169 / CCUG 5858 / IAM 1056 / NBRC 3333 / NCIMB 9278 / NCTC 2665 / VKM Ac-2230) (Micrococcus lysodeikticus).